Reading from the N-terminus, the 625-residue chain is MPRHGVSPGQGLPRSGREQASDRSLGAPCLRLLWLGLALALALPNSPVLWSPAEARPLPTQGHPAKFIRIAPQLQEAFGWWNLTCPTCKGLFTAIDFGLRNQASVAWVGSVAIKLCVLLKIAPPAVCQSAVQLFEDDMVEVWTRSVLSPSEACGLLLGSSCGHWDIFSSWNISLPAVPKPPPQPPKPPAPGSPVSRVLFLTDLHWDHDYLEGTDPNCENPLCCRRDSGPPPASQPGAGYWGEYSKCDLPLRTLESLLSGLGPAGPFDMVYWTGDIPAHNIWQQSRQDQLRALTTITALVKKFLGPVPVYPAVGNHESTPVNGFPPPFIKGNQSSHWLYEAMAEAWEPWLPAEALRTLRIGGFYALSPRPGLRLISLNMNFCSRENFWLLINSTDPAGQLQWLVGELQAAEDRGDKVHIIGHIPPGHCLKSWSWNYYRIVERYENTLAGQFFGHTHVDEFEVFYDEETLSRPLSVAFLAPSATTYIGLNPGYRVYQIDGNYSGSSHVVLDHETYIMNLTEANEPGATPHWYLLYRARETYGLPNALPTAWHDLVYRMRKDTQLFQTFWFLYHKGHPPSEPCGTPCRLATLCAQLSARSDSPALCRHLVPDASLPDVQSLWSMPLLC.

Residues 1-20 (MPRHGVSPGQGLPRSGREQA) are disordered. Positions 1 to 40 (MPRHGVSPGQGLPRSGREQASDRSLGAPCLRLLWLGLALA) are cleaved as a signal peptide. The Saposin B-type domain occupies 81–165 (WNLTCPTCKG…LLGSSCGHWD (85 aa)). An N-linked (GlcNAc...) asparagine glycan is attached at N82. Disulfide bonds link C85–C161, C88–C153, and C116–C127. N171 carries an N-linked (GlcNAc...) asparagine glycan. Positions 202 and 204 each coordinate Zn(2+). 2 disulfides stabilise this stretch: C217–C222 and C223–C246. Zn(2+) is bound by residues D274 and N314. N-linked (GlcNAc...) asparagine glycosylation is found at N331 and N391. Residues C381 and C427 are joined by a disulfide bond. Zn(2+) contacts are provided by H421, H453, and H455. N499 is a glycosylation site (N-linked (GlcNAc...) asparagine). S504 carries the phosphoserine modification. N-linked (GlcNAc...) asparagine glycosylation occurs at N516. 2 cysteine pairs are disulfide-bonded: C580–C584 and C590–C603.

This sequence belongs to the acid sphingomyelinase family. As to quaternary structure, monomer. Interacts with SORT1; the interaction is required for SMPD1 targeting to lysosomes. The cofactor is Zn(2+). Proteolytically processed. Mature lysosomal form arises from C-terminal proteolytic processing of pro-sphingomyelin phosphodiesterase. Post-translationally, both lysosomal and secreted forms are glycosylated but they show a differential pattern of glycosylation. In terms of processing, phosphorylated at Ser-504 by PRKCD upon stress stimuli. Phosphorylation is required for secretion. This form is generated following cleavage by CASP7 in the extracellular milieu. It shows increased activity.

It is found in the lysosome. The protein localises to the lipid droplet. The protein resides in the secreted. It localises to the extracellular space. The catalysed reaction is a sphingomyelin + H2O = phosphocholine + an N-acylsphing-4-enine + H(+). It catalyses the reaction N-(octadecanoyl)-sphing-4-enine-1-phosphocholine + H2O = N-octadecanoylsphing-4-enine + phosphocholine + H(+). The enzyme catalyses a 1,2-diacyl-sn-glycero-3-phosphocholine + H2O = phosphocholine + a 1,2-diacyl-sn-glycerol + H(+). It carries out the reaction 1,2-dihexadecanoyl-sn-glycero-3-phosphocholine + H2O = 1,2-dihexadecanoyl-sn-glycerol + phosphocholine + H(+). With respect to regulation, hydrolysis of liposomal sphingomyelin is stimulated by incorporation of diacylglycerol (DAG), ceramide and free fatty acids into the liposomal membranes. Phosphatidylcholine hydrolysis is inhibited by incorporation of cholesterol, ceramide, DAG, monoacylglycerol and fatty acids. Converts sphingomyelin to ceramide. Exists as two enzymatic forms that arise from alternative trafficking of a single protein precursor, one that is targeted to the endolysosomal compartment, whereas the other is released extracellularly. However, in response to various forms of stress, lysosomal exocytosis may represent a major source of the secretory form. Its function is as follows. In the lysosomes, converts sphingomyelin to ceramide. Plays an important role in the export of cholesterol from the intraendolysosomal membranes. Also has phospholipase C activities toward 1,2-diacylglycerolphosphocholine and 1,2-diacylglycerolphosphoglycerol. Modulates stress-induced apoptosis through the production of ceramide. In terms of biological role, when secreted, modulates cell signaling with its ability to reorganize the plasma membrane by converting sphingomyelin to ceramide. Secreted form is increased in response to stress and inflammatory mediators such as IL1B, IFNG or TNF as well as upon infection with bacteria and viruses. Produces the release of ceramide in the outer leaflet of the plasma membrane playing a central role in host defense. Ceramide reorganizes these rafts into larger signaling platforms that are required to internalize bacteria, induce apoptosis and regulate the cytokine response in infected cells. In wounded cells, the lysosomal form is released extracellularly in the presence of Ca(2+) and promotes endocytosis and plasma membrane repair. Functionally, this form is generated following cleavage by CASP7 in the extracellular milieu in response to bacterial infection. It shows increased ability to convert sphingomyelin to ceramide and promotes plasma membrane repair. Plasma membrane repair by ceramide counteracts the action of gasdermin-D (GSDMD) perforin (PRF1) pores that are formed in response to bacterial infection. The chain is Sphingomyelin phosphodiesterase (SMPD1) from Bos taurus (Bovine).